A 228-amino-acid polypeptide reads, in one-letter code: L-ribulose-5-phosphate 4-epimerase UlaF (228 aa).

Substrate-binding positions include 26-27 (GN), 43-44 (SG), and 72-73 (SS). Residues Asp74, His93, and His95 each coordinate Zn(2+). The Proton donor/acceptor role is filled by Asp118. Residue His167 coordinates Zn(2+). Tyr225 acts as the Proton donor/acceptor in catalysis.

It belongs to the aldolase class II family. AraD/FucA subfamily. Requires Zn(2+) as cofactor.

It catalyses the reaction L-ribulose 5-phosphate = D-xylulose 5-phosphate. The protein operates within cofactor degradation; L-ascorbate degradation; D-xylulose 5-phosphate from L-ascorbate: step 4/4. Functionally, catalyzes the isomerization of L-ribulose 5-phosphate to D-xylulose 5-phosphate. Is involved in the anaerobic L-ascorbate utilization. The chain is L-ribulose-5-phosphate 4-epimerase UlaF from Escherichia coli O45:K1 (strain S88 / ExPEC).